The chain runs to 479 residues: NADH-quinone oxidoreductase subunit N (479 aa).

14 helical membrane passes run 3-23 (MLYG…FQLI), 40-60 (IGFA…FNGI), 77-97 (IIIL…IKVA), 102-122 (HSEY…LVSA), 125-145 (FMVM…LTTF), 159-179 (YFIL…LVYG), 200-220 (MAVL…KLSI), 234-254 (APLV…LALL), 268-288 (FFYI…VGAF), 299-319 (FIAY…VANS), 327-347 (ISYF…AIII), 373-393 (SILI…AGFI), 409-429 (ELII…LNIV), and 452-472 (LVSI…MLFG).

The protein belongs to the complex I subunit 2 family. In terms of assembly, NDH-1 is composed of 14 different subunits. Subunits NuoA, H, J, K, L, M, N constitute the membrane sector of the complex.

It is found in the cell inner membrane. The catalysed reaction is a quinone + NADH + 5 H(+)(in) = a quinol + NAD(+) + 4 H(+)(out). In terms of biological role, NDH-1 shuttles electrons from NADH, via FMN and iron-sulfur (Fe-S) centers, to quinones in the respiratory chain. The immediate electron acceptor for the enzyme in this species is believed to be ubiquinone. Couples the redox reaction to proton translocation (for every two electrons transferred, four hydrogen ions are translocated across the cytoplasmic membrane), and thus conserves the redox energy in a proton gradient. The polypeptide is NADH-quinone oxidoreductase subunit N (Orientia tsutsugamushi (strain Ikeda) (Rickettsia tsutsugamushi)).